We begin with the raw amino-acid sequence, 150 residues long: Ribosome maturation factor RimP (150 aa).

Belongs to the RimP family.

Its subcellular location is the cytoplasm. In terms of biological role, required for maturation of 30S ribosomal subunits. This Salmonella dublin (strain CT_02021853) protein is Ribosome maturation factor RimP.